An 887-amino-acid polypeptide reads, in one-letter code: Beta-galactosidase 9 (887 aa).

Residues 1–30 form the signal peptide; it reads MAESIRTFSLQWRILSLIIALLVYFPILSG. Asparagine 37 is a glycosylation site (N-linked (GlcNAc...) asparagine). Glutamate 194 acts as the Proton donor in catalysis. The Nucleophile role is filled by glutamate 263. N-linked (GlcNAc...) asparagine glycans are attached at residues asparagine 463, asparagine 485, asparagine 496, asparagine 527, and asparagine 785. One can recognise an SUEL-type lectin domain in the interval 791-877; sequence NSVAPEVHLH…KTLAVMSRCS (87 aa). An N-linked (GlcNAc...) asparagine glycan is attached at asparagine 881.

Belongs to the glycosyl hydrolase 35 family. In terms of tissue distribution, ubiquitous, with higher expression levels in siliques.

Its subcellular location is the secreted. It localises to the extracellular space. The protein resides in the apoplast. The enzyme catalyses Hydrolysis of terminal non-reducing beta-D-galactose residues in beta-D-galactosides.. The chain is Beta-galactosidase 9 (BGAL9) from Arabidopsis thaliana (Mouse-ear cress).